We begin with the raw amino-acid sequence, 447 residues long: Cobyrinate a,c-diamide synthase (447 aa).

Positions 252-439 (KIAIAFDESF…AHQHAVGNPY (188 aa)) constitute a GATase cobBQ-type domain. The active-site Nucleophile is C331.

Belongs to the CobB/CbiA family. Mg(2+) is required as a cofactor.

It catalyses the reaction cob(II)yrinate + 2 L-glutamine + 2 ATP + 2 H2O = cob(II)yrinate a,c diamide + 2 L-glutamate + 2 ADP + 2 phosphate + 2 H(+). The enzyme catalyses Ni-sirohydrochlorin + 2 L-glutamine + 2 ATP + 2 H2O = Ni-sirohydrochlorin a,c-diamide + 2 L-glutamate + 2 ADP + 2 phosphate + 2 H(+). Its pathway is cofactor biosynthesis; adenosylcobalamin biosynthesis; cob(II)yrinate a,c-diamide from sirohydrochlorin (anaerobic route): step 10/10. In terms of biological role, catalyzes the ATP-dependent amidation of the two carboxylate groups at positions a and c of cobyrinate, using either L-glutamine or ammonia as the nitrogen source. Involved in the biosynthesis of the unique nickel-containing tetrapyrrole coenzyme F430, the prosthetic group of methyl-coenzyme M reductase (MCR), which plays a key role in methanogenesis and anaerobic methane oxidation. Catalyzes the ATP-dependent amidation of the two carboxylate groups at positions a and c of Ni-sirohydrochlorin, using L-glutamine or ammonia as the nitrogen source. This Methanococcus vannielii (strain ATCC 35089 / DSM 1224 / JCM 13029 / OCM 148 / SB) protein is Cobyrinate a,c-diamide synthase.